The following is a 439-amino-acid chain: tRNA modification GTPase MnmE (439 aa).

(6S)-5-formyl-5,6,7,8-tetrahydrofolate-binding residues include Arg-24, Glu-81, and Lys-121. A TrmE-type G domain is found at 218–363 (GFKVVIAGAP…LRDLIGRVVK (146 aa)). K(+) is bound at residue Asn-228. Residues 228-233 (NAGKSS), 247-253 (TDIAGTT), and 272-275 (DTAG) contribute to the GTP site. Position 232 (Ser-232) interacts with Mg(2+). The K(+) site is built by Thr-247, Ile-249, and Thr-252. Thr-253 contacts Mg(2+). A (6S)-5-formyl-5,6,7,8-tetrahydrofolate-binding site is contributed by Lys-439.

This sequence belongs to the TRAFAC class TrmE-Era-EngA-EngB-Septin-like GTPase superfamily. TrmE GTPase family. In terms of assembly, homodimer. Heterotetramer of two MnmE and two MnmG subunits. It depends on K(+) as a cofactor.

The protein resides in the cytoplasm. Functionally, exhibits a very high intrinsic GTPase hydrolysis rate. Involved in the addition of a carboxymethylaminomethyl (cmnm) group at the wobble position (U34) of certain tRNAs, forming tRNA-cmnm(5)s(2)U34. In Rhizobium etli (strain CIAT 652), this protein is tRNA modification GTPase MnmE.